The chain runs to 242 residues: Small ribosomal subunit protein uS2 (242 aa).

Belongs to the universal ribosomal protein uS2 family.

In Shewanella amazonensis (strain ATCC BAA-1098 / SB2B), this protein is Small ribosomal subunit protein uS2.